The primary structure comprises 255 residues: Acetylglutamate kinase (255 aa).

Substrate contacts are provided by residues 40–41, Arg62, and Asn153; that span reads GG.

This sequence belongs to the acetylglutamate kinase family. ArgB subfamily.

Its subcellular location is the cytoplasm. The catalysed reaction is N-acetyl-L-glutamate + ATP = N-acetyl-L-glutamyl 5-phosphate + ADP. It functions in the pathway amino-acid biosynthesis; L-arginine biosynthesis; N(2)-acetyl-L-ornithine from L-glutamate: step 2/4. In terms of biological role, catalyzes the ATP-dependent phosphorylation of N-acetyl-L-glutamate. The sequence is that of Acetylglutamate kinase from Bacillus thuringiensis subsp. konkukian (strain 97-27).